A 288-amino-acid polypeptide reads, in one-letter code: Large ribosomal subunit protein uL2 (288 aa).

Positions Gly232–Tyr265 are disordered. Residues Asp239–Glu255 show a composition bias toward basic and acidic residues.

It belongs to the universal ribosomal protein uL2 family. In terms of assembly, part of the 50S ribosomal subunit. Forms a bridge to the 30S subunit in the 70S ribosome.

In terms of biological role, one of the primary rRNA binding proteins. Required for association of the 30S and 50S subunits to form the 70S ribosome, for tRNA binding and peptide bond formation. It has been suggested to have peptidyltransferase activity; this is somewhat controversial. Makes several contacts with the 16S rRNA in the 70S ribosome. The polypeptide is Large ribosomal subunit protein uL2 (Hydrogenobaculum sp. (strain Y04AAS1)).